A 123-amino-acid polypeptide reads, in one-letter code: Large ribosomal subunit protein bL12 (123 aa).

Belongs to the bacterial ribosomal protein bL12 family. In terms of assembly, homodimer. Part of the ribosomal stalk of the 50S ribosomal subunit. Forms a multimeric L10(L12)X complex, where L10 forms an elongated spine to which 2 to 4 L12 dimers bind in a sequential fashion. Binds GTP-bound translation factors.

Forms part of the ribosomal stalk which helps the ribosome interact with GTP-bound translation factors. Is thus essential for accurate translation. This chain is Large ribosomal subunit protein bL12, found in Laribacter hongkongensis (strain HLHK9).